Here is a 476-residue protein sequence, read N- to C-terminus: Siroheme synthase (476 aa).

The segment at 1 to 204 (MDYFPVFLNI…GKDQAAQDYL (204 aa)) is precorrin-2 dehydrogenase /sirohydrochlorin ferrochelatase. Residues 22–23 (SV) and 43–44 (PT) each bind NAD(+). Ser-129 carries the post-translational modification Phosphoserine. Residues 218–476 (GEVYLVGAGP…GNTPGYSKHP (259 aa)) form a uroporphyrinogen-III C-methyltransferase region. Pro-227 is an S-adenosyl-L-methionine binding site. Residue Asp-250 is the Proton acceptor of the active site. Lys-272 functions as the Proton donor in the catalytic mechanism. S-adenosyl-L-methionine contacts are provided by residues 303-305 (GGD), Ile-308, 333-334 (TA), Met-385, and Gly-414.

In the N-terminal section; belongs to the precorrin-2 dehydrogenase / sirohydrochlorin ferrochelatase family. The protein in the C-terminal section; belongs to the precorrin methyltransferase family.

The enzyme catalyses uroporphyrinogen III + 2 S-adenosyl-L-methionine = precorrin-2 + 2 S-adenosyl-L-homocysteine + H(+). The catalysed reaction is precorrin-2 + NAD(+) = sirohydrochlorin + NADH + 2 H(+). It catalyses the reaction siroheme + 2 H(+) = sirohydrochlorin + Fe(2+). It functions in the pathway cofactor biosynthesis; adenosylcobalamin biosynthesis; precorrin-2 from uroporphyrinogen III: step 1/1. Its pathway is cofactor biosynthesis; adenosylcobalamin biosynthesis; sirohydrochlorin from precorrin-2: step 1/1. It participates in porphyrin-containing compound metabolism; siroheme biosynthesis; precorrin-2 from uroporphyrinogen III: step 1/1. The protein operates within porphyrin-containing compound metabolism; siroheme biosynthesis; siroheme from sirohydrochlorin: step 1/1. It functions in the pathway porphyrin-containing compound metabolism; siroheme biosynthesis; sirohydrochlorin from precorrin-2: step 1/1. Multifunctional enzyme that catalyzes the SAM-dependent methylations of uroporphyrinogen III at position C-2 and C-7 to form precorrin-2 via precorrin-1. Then it catalyzes the NAD-dependent ring dehydrogenation of precorrin-2 to yield sirohydrochlorin. Finally, it catalyzes the ferrochelation of sirohydrochlorin to yield siroheme. This Nitrosomonas eutropha (strain DSM 101675 / C91 / Nm57) protein is Siroheme synthase.